A 347-amino-acid polypeptide reads, in one-letter code: Dihydroorotate dehydrogenase (quinone) (347 aa).

FMN is bound by residues 65–69 (AGLDK) and threonine 89. Lysine 69 provides a ligand contact to substrate. A substrate-binding site is contributed by 114-118 (NRMGF). FMN-binding residues include asparagine 146 and asparagine 179. Substrate is bound at residue asparagine 179. Serine 182 (nucleophile) is an active-site residue. Residue asparagine 184 coordinates substrate. Residues lysine 224 and threonine 252 each coordinate FMN. Residue 253–254 (NT) coordinates substrate. Residues glycine 275, glycine 304, and 325–326 (YT) each bind FMN.

It belongs to the dihydroorotate dehydrogenase family. Type 2 subfamily. In terms of assembly, monomer. FMN serves as cofactor.

It localises to the cell membrane. It catalyses the reaction (S)-dihydroorotate + a quinone = orotate + a quinol. It functions in the pathway pyrimidine metabolism; UMP biosynthesis via de novo pathway; orotate from (S)-dihydroorotate (quinone route): step 1/1. Functionally, catalyzes the conversion of dihydroorotate to orotate with quinone as electron acceptor. The protein is Dihydroorotate dehydrogenase (quinone) of Herminiimonas arsenicoxydans.